The sequence spans 339 residues: Uroporphyrinogen decarboxylase (339 aa).

Residues 23-27, D72, Y147, T202, and H315 each bind substrate; that span reads RQAGR.

It belongs to the uroporphyrinogen decarboxylase family. In terms of assembly, homodimer.

Its subcellular location is the cytoplasm. It carries out the reaction uroporphyrinogen III + 4 H(+) = coproporphyrinogen III + 4 CO2. It functions in the pathway porphyrin-containing compound metabolism; protoporphyrin-IX biosynthesis; coproporphyrinogen-III from 5-aminolevulinate: step 4/4. In terms of biological role, catalyzes the decarboxylation of four acetate groups of uroporphyrinogen-III to yield coproporphyrinogen-III. In Geotalea uraniireducens (strain Rf4) (Geobacter uraniireducens), this protein is Uroporphyrinogen decarboxylase.